The sequence spans 422 residues: Serine protease HTRA2, mitochondrial (422 aa).

A mitochondrion-targeting transit peptide spans 1–17; that stretch reads MALRGSHRLEVIFKRCI. Positions 18–74 are excised as a propeptide; it reads ASPVFHSHAANRRSSQLAIKGTDPSSNGNSGQDQQNGEQKAKGWRRLVRFFVPFSLG. Polar residues predominate over residues 29–55; the sequence is RRSSQLAIKGTDPSSNGNSGQDQQNGE. Residues 29–56 form a disordered region; it reads RRSSQLAIKGTDPSSNGNSGQDQQNGEQ. Residues 64–82 traverse the membrane as a helical segment; that stretch reads LVRFFVPFSLGAAVSAAVI. 2 consecutive short sequence motifs (IAP-binding) follow at residues 75-78 and 94-97; these read AAVS and SKMT. The tract at residues 139–302 is serine protease; sequence SNGSGFIIEQ…IPIDYVKVFL (164 aa). Residues His157, Asp189, and Ser266 each act as charge relay system in the active site. The region spanning 325–410 is the PDZ domain; the sequence is MGITMLTLTP…NLDIVILRGV (86 aa).

It belongs to the peptidase S1C family. In terms of assembly, interacts with th/DIAP1 (via BIR 2 domain).

The protein localises to the mitochondrion intermembrane space. The protein resides in the mitochondrion membrane. It catalyses the reaction Cleavage of non-polar aliphatic amino-acids at the P1 position, with a preference for Val, Ile and Met. At the P2 and P3 positions, Arg is selected most strongly with a secondary preference for other hydrophilic residues.. In terms of biological role, serine protease that shows proteolytic activity against a non-specific substrate beta-casein. Promotes or induces cell death either by direct binding to and inhibition of BIRC proteins (also called inhibitor of apoptosis proteins, IAPs), leading to an increase in caspase activity, or by a BIRC inhibition-independent, caspase-independent and serine protease activity-dependent mechanism. Can antagonize antiapoptotic activity of th/Diap1 by directly inducing the degradation of th/Diap1. In Drosophila yakuba (Fruit fly), this protein is Serine protease HTRA2, mitochondrial.